The following is a 148-amino-acid chain: Prefoldin subunit 2 (148 aa).

Residues 87–114 are a coiled coil; the sequence is KDGLEEVVRKLYETLEKKKKDLTEFEAK. The segment covering 122-134 has biased composition (basic and acidic residues); sequence QEDNKEGGNKKEG. The tract at residues 122–148 is disordered; that stretch reads QEDNKEGGNKKEGNAQGVLVGAASSSQ.

The protein belongs to the prefoldin subunit beta family. As to quaternary structure, heterohexamer of two PFD-alpha type and four PFD-beta type subunits forming prefoldin co-chaperone complex. Interacts with LSM8, a specific subunit of the LSM2-8 complex, which is a core component of the spliceosome.

The protein resides in the cytoplasm. It is found in the nucleus. Functionally, binds specifically to cytosolic chaperonin (c-CPN) and transfers target proteins to it. Binds to nascent polypeptide chain and promotes folding in an environment in which there are many competing pathways for nonnative proteins. Together with other chaperonins, contribute to the regulation of gene expression by modulating the spliceosome function on pre-mRNA splicing post-transcriptionally by acting as a co-chaperone of Hsp90 to control levels of LSM8. Required for microtubules (MTs) organization and dynamicity. Involved in the process leading to microtubules dissociation in response to gibberellic acid (GA) probably due to the DELLA proteins-mediated translocation of the prefoldin co-chaperone complex from the cytoplasm to the nucleus. This chain is Prefoldin subunit 2, found in Arabidopsis thaliana (Mouse-ear cress).